The following is a 122-amino-acid chain: Putative iron-sulfur cluster insertion protein ErpA (122 aa).

Positions 50, 114, and 116 each coordinate iron-sulfur cluster.

The protein belongs to the HesB/IscA family. As to quaternary structure, homodimer. Iron-sulfur cluster serves as cofactor.

Its function is as follows. Required for insertion of 4Fe-4S clusters. The protein is Putative iron-sulfur cluster insertion protein ErpA of Burkholderia mallei (strain NCTC 10247).